We begin with the raw amino-acid sequence, 504 residues long: Maturase K (504 aa).

The protein belongs to the intron maturase 2 family. MatK subfamily.

It localises to the plastid. The protein resides in the chloroplast. Usually encoded in the trnK tRNA gene intron. Probably assists in splicing its own and other chloroplast group II introns. The chain is Maturase K from Thlaspi arvense (Field penny-cress).